The following is a 483-amino-acid chain: FAD-dependent oxidoreductase oblC (483 aa).

A signal peptide spans 1-21; the sequence is MRSVTSLVSFSACLLASSVTA. N-linked (GlcNAc...) asparagine glycans are attached at residues asparagine 100, asparagine 137, asparagine 190, and asparagine 240.

The protein belongs to the beta-cyclopiazonate dehydrogenase family. FAD is required as a cofactor.

It functions in the pathway secondary metabolite biosynthesis; terpenoid biosynthesis. Its function is as follows. FAD-dependent oxidoreductase; part of the gene cluster that mediates the biosynthesis of the sesterterpenes ophiobolins, fungal phytotoxins with potential anti-cancer activities. The first step of the pathway is performed by the sesterterpene synthase oblA that possesses both prenyl transferase and terpene cyclase activity, converting isopentenyl diphosphate and dimethylallyl diphosphate into geranylfarnesyl diphosphate (GFPP) and further converting GFPP into ophiobolin F, respectively. Other sesterterpenoids (C(25) terpenoids) are found as minor products of oblA. The cytochrome P450 monooxygenase oblB then catalyzes a four-step oxidative transformation of ophiobolin F to yield ophiobolin C. The FAD-dependent oxidoreductase oblC might be involved in a later oxidation step that produces ophiobolin A. The chain is FAD-dependent oxidoreductase oblC from Cochliobolus heterostrophus (strain C5 / ATCC 48332 / race O) (Southern corn leaf blight fungus).